A 145-amino-acid chain; its full sequence is Secreted LysM effector Vd2LysM (145 aa).

The signal sequence occupies residues methionine 1–alanine 18. LysM domains follow at residues glycine 31 to valine 75 and glycine 96 to valine 140.

Belongs to the secreted LysM effector family. As to quaternary structure, forms homodimers in a chitin-independent manner through interactions at the N-termini of EPL2 monomers. Homodimers are further polymerized in a chitin-dependent manner.

Secreted effector that enables the plant pathogenic fungus to manipulate host defenses for successful infection. Binds chitin, suppresses chitin-induced immune responses and protects hyphae against degradation by plant hydrolytic enzymes. Chitin-induced polymerization of homodimers forms a contiguous ELP2 highly oligomeric super-complexe that may precipitate at infection sites to eliminate chitin oligomers, and thus suppress the activation of chitin-induced plant immunity. The polypeptide is Secreted LysM effector Vd2LysM (Verticillium dahliae (strain VdLs.17 / ATCC MYA-4575 / FGSC 10137) (Verticillium wilt)).